Consider the following 149-residue polypeptide: Deoxyuridine 5'-triphosphate nucleotidohydrolase (149 aa).

Residues 68–70 (RSG), Asn-81, 85–87 (LID), and Met-95 each bind substrate.

Belongs to the dUTPase family. Mg(2+) serves as cofactor.

It catalyses the reaction dUTP + H2O = dUMP + diphosphate + H(+). Its pathway is pyrimidine metabolism; dUMP biosynthesis; dUMP from dCTP (dUTP route): step 2/2. Its function is as follows. This enzyme is involved in nucleotide metabolism: it produces dUMP, the immediate precursor of thymidine nucleotides and it decreases the intracellular concentration of dUTP so that uracil cannot be incorporated into DNA. The polypeptide is Deoxyuridine 5'-triphosphate nucleotidohydrolase (Albidiferax ferrireducens (strain ATCC BAA-621 / DSM 15236 / T118) (Rhodoferax ferrireducens)).